Consider the following 645-residue polypeptide: Chaperone protein DnaK (645 aa).

Phosphothreonine; by autocatalysis is present on Thr-201. Positions 606 to 629 are enriched in low complexity; sequence NTNNATAGDNNTTDTGSSSNSDGS. Positions 606 to 645 are disordered; it reads NTNNATAGDNNTTDTGSSSNSDGSKVVDSDYQEIDKKDGK. Residues 630 to 645 are compositionally biased toward basic and acidic residues; it reads KVVDSDYQEIDKKDGK.

Belongs to the heat shock protein 70 family.

Acts as a chaperone. This is Chaperone protein DnaK from Ehrlichia ruminantium (strain Gardel).